The primary structure comprises 151 residues: MKQKADNLIAQNKKANHDYFIKETLEAGIALTGTEIKSIRARRINLRDGYVQIINGSAFLENVHISEYKEGNRYNHDPLRSRRLLLHKREIARLAGIQAQQGMAIIPLKVYLKHGFAKVLIGVGQGKKQYDKRQTIKKRDQDREIHRKYGI.

Residues 132–151 (KRQTIKKRDQDREIHRKYGI) are disordered.

It belongs to the SmpB family.

The protein localises to the cytoplasm. Functionally, required for rescue of stalled ribosomes mediated by trans-translation. Binds to transfer-messenger RNA (tmRNA), required for stable association of tmRNA with ribosomes. tmRNA and SmpB together mimic tRNA shape, replacing the anticodon stem-loop with SmpB. tmRNA is encoded by the ssrA gene; the 2 termini fold to resemble tRNA(Ala) and it encodes a 'tag peptide', a short internal open reading frame. During trans-translation Ala-aminoacylated tmRNA acts like a tRNA, entering the A-site of stalled ribosomes, displacing the stalled mRNA. The ribosome then switches to translate the ORF on the tmRNA; the nascent peptide is terminated with the 'tag peptide' encoded by the tmRNA and targeted for degradation. The ribosome is freed to recommence translation, which seems to be the essential function of trans-translation. This chain is SsrA-binding protein, found in Lactobacillus gasseri (strain ATCC 33323 / DSM 20243 / BCRC 14619 / CIP 102991 / JCM 1131 / KCTC 3163 / NCIMB 11718 / NCTC 13722 / AM63).